A 170-amino-acid chain; its full sequence is MHPALYTRASMIREIAAAVAFISKFLRTKGLMNERQLQTFSQSLQELLAEHYKHHWFPEKPCKGSGYRCIRINHKMDPLIGQAAQRIGLSSQELFQLLPSELTLWVDPYEVSYRIGEDGSICVLYEAAPAGGSQNNTNMQMVDSRISCKEELLLGRTSPSKSYNMMTVSG.

It belongs to the BTG family.

Its function is as follows. Anti-proliferative protein. This Gallus gallus (Chicken) protein is Protein BTG1 (BTG1).